A 393-amino-acid chain; its full sequence is S-adenosylmethionine synthase (393 aa).

ATP is bound at residue His17. Mg(2+) is bound at residue Asp19. Glu45 lines the K(+) pocket. Glu58 and Gln106 together coordinate L-methionine. The segment at 106–116 is flexible loop; it reads QSAHIAQGVDA. ATP contacts are provided by residues 171-173, Asp246, 252-253, Ala269, and Lys273; these read DAK and RK. Position 246 (Asp246) interacts with L-methionine. Lys277 serves as a coordination point for L-methionine.

The protein belongs to the AdoMet synthase family. Homotetramer; dimer of dimers. Requires Mg(2+) as cofactor. It depends on K(+) as a cofactor.

Its subcellular location is the cytoplasm. The catalysed reaction is L-methionine + ATP + H2O = S-adenosyl-L-methionine + phosphate + diphosphate. It participates in amino-acid biosynthesis; S-adenosyl-L-methionine biosynthesis; S-adenosyl-L-methionine from L-methionine: step 1/1. Catalyzes the formation of S-adenosylmethionine (AdoMet) from methionine and ATP. The overall synthetic reaction is composed of two sequential steps, AdoMet formation and the subsequent tripolyphosphate hydrolysis which occurs prior to release of AdoMet from the enzyme. The polypeptide is S-adenosylmethionine synthase (Roseobacter denitrificans (strain ATCC 33942 / OCh 114) (Erythrobacter sp. (strain OCh 114))).